A 163-amino-acid polypeptide reads, in one-letter code: Nucleotide-binding protein HAPS_2236 (163 aa).

The protein belongs to the YajQ family.

Nucleotide-binding protein. This is Nucleotide-binding protein HAPS_2236 from Glaesserella parasuis serovar 5 (strain SH0165) (Haemophilus parasuis).